The following is a 396-amino-acid chain: Purine ribonucleoside efflux pump NepI (396 aa).

Over 1–21 the chain is Cytoplasmic; the sequence is MSEFIAENRGANAITRPNWSA. Residues 22–42 form a helical membrane-spanning segment; that stretch reads VFSVAFCVACLIIVEFLPVSL. At 43–54 the chain is on the periplasmic side; sequence LTPMAQDLGISE. Residues 55–75 traverse the membrane as a helical segment; sequence GVAGQSVTVTAFVAMFASLFI. Over 76 to 85 the chain is Cytoplasmic; that stretch reads TQTIQATDRR. The helical transmembrane segment at 86–106 threads the bilayer; sequence YVVILFAVLLTLSCLLVSFAN. Residue Ser107 is a topological domain, periplasmic. Residues 108 to 128 form a helical membrane-spanning segment; the sequence is FSLLLIGRACLGLALGGFWAM. Over 129–147 the chain is Cytoplasmic; that stretch reads SASLTMRLVPPRTVPKALS. The helical transmembrane segment at 148–168 threads the bilayer; sequence VIFGAVSIALVIAAPLGSFLG. Over 169 to 175 the chain is Periplasmic; it reads ELIGWRN. A helical transmembrane segment spans residues 176 to 196; the sequence is VFNAAAAMGVLCIFWIIKSLP. Residues 197–215 are Cytoplasmic-facing; the sequence is SLPGEPSHQKQNTFRLLQR. A helical membrane pass occupies residues 216–236; the sequence is PGVMAGMIAIFMSFAGQFAFF. Over 237–255 the chain is Periplasmic; the sequence is TYIRPVYMNLAGFGVDGLT. The chain crosses the membrane as a helical span at residues 256 to 276; sequence LVLLSFGIASFVGTSLSSFIL. At 277-281 the chain is on the cytoplasmic side; it reads KRSVK. The chain crosses the membrane as a helical span at residues 282-302; the sequence is LALAGAPFVLALSALVLTLWG. The Periplasmic portion of the chain corresponds to 303–305; the sequence is SYK. The helical transmembrane segment at 306 to 326 threads the bilayer; sequence IVATGVAIIWGLTFALIPVGW. The Cytoplasmic segment spans residues 327-343; that stretch reads STWITRSLADQAEKAGS. The chain crosses the membrane as a helical span at residues 344-364; it reads IQVAVIQLANTCGAAIGGYAL. The Periplasmic segment spans residues 365 to 366; the sequence is DN. A helical membrane pass occupies residues 367 to 387; sequence IGLTSPLMLSGTLMLLTALLV. At 388 to 396 the chain is on the cytoplasmic side; sequence TAKVKMKKS.

It belongs to the major facilitator superfamily. DHA1 family. NepI (TC 2.A.1.2.26) subfamily.

It localises to the cell inner membrane. The catalysed reaction is inosine(in) + H(+)(out) = inosine(out) + H(+)(in). It catalyses the reaction guanosine(in) + H(+)(out) = guanosine(out) + H(+)(in). Functionally, involved in the efflux of purine ribonucleosides, such as inosine and guanosine. This chain is Purine ribonucleoside efflux pump NepI, found in Escherichia coli O6:H1 (strain CFT073 / ATCC 700928 / UPEC).